We begin with the raw amino-acid sequence, 206 residues long: Large ribosomal subunit protein uL4 (206 aa).

The disordered stretch occupies residues 63 to 94 (MYKQKGTGRARHHSARAPQFRGGGKAHGPVVR). Positions 64 to 77 (YKQKGTGRARHHSA) are enriched in basic residues.

The protein belongs to the universal ribosomal protein uL4 family. In terms of assembly, part of the 50S ribosomal subunit.

Its function is as follows. One of the primary rRNA binding proteins, this protein initially binds near the 5'-end of the 23S rRNA. It is important during the early stages of 50S assembly. It makes multiple contacts with different domains of the 23S rRNA in the assembled 50S subunit and ribosome. In terms of biological role, forms part of the polypeptide exit tunnel. The sequence is that of Large ribosomal subunit protein uL4 from Mesorhizobium japonicum (strain LMG 29417 / CECT 9101 / MAFF 303099) (Mesorhizobium loti (strain MAFF 303099)).